The sequence spans 145 residues: Ribosome-binding factor A (145 aa).

Residues 122–132 are compositionally biased toward basic and acidic residues; it reads KVQRDLESAPR. Residues 122–145 form a disordered region; sequence KVQRDLESAPREDDEGEPASSSRD.

It belongs to the RbfA family. Monomer. Binds 30S ribosomal subunits, but not 50S ribosomal subunits or 70S ribosomes.

Its subcellular location is the cytoplasm. Its function is as follows. One of several proteins that assist in the late maturation steps of the functional core of the 30S ribosomal subunit. Associates with free 30S ribosomal subunits (but not with 30S subunits that are part of 70S ribosomes or polysomes). Required for efficient processing of 16S rRNA. May interact with the 5'-terminal helix region of 16S rRNA. The polypeptide is Ribosome-binding factor A (Methylorubrum extorquens (strain CM4 / NCIMB 13688) (Methylobacterium extorquens)).